The chain runs to 438 residues: Vasoactive intestinal polypeptide receptor 2 (438 aa).

An N-terminal signal peptide occupies residues 1-23 (MRTLLPPALLTCWLLAPVNSIHP). Residues 24–124 (ECRFHLEIQE…EDESKITFYI (101 aa)) are Extracellular-facing. Intrachain disulfides connect cysteine 38/cysteine 61, cysteine 52/cysteine 93, and cysteine 75/cysteine 109. Asparagine 58, asparagine 88, and asparagine 92 each carry an N-linked (GlcNAc...) asparagine glycan. A helical membrane pass occupies residues 125 to 150 (LVKAIYTLGYSVSLMSLATGSIILCL). Residues 151 to 158 (FRKLHCTR) are Cytoplasmic-facing. The chain crosses the membrane as a helical span at residues 159 to 180 (NYIHLNLFLSFILRAISVLVKD). Residues 181–203 (DVLYSSSGTLHCPDQPSSWVGCK) lie on the Extracellular side of the membrane. A disulfide bridge connects residues cysteine 202 and cysteine 271. A helical transmembrane segment spans residues 204-228 (LSLVFLQYCIMANFFWLLVEGLYLH). Topologically, residues 229–239 (TLLVAMLPPRR) are cytoplasmic. Residues 240 to 261 (CFLAYLLIGWGLPTVCIGAWTA) traverse the membrane as a helical segment. Over 262-280 (ARLYLEDTGCWDTNDHSVP) the chain is Extracellular. A helical membrane pass occupies residues 281-304 (WWVIRIPILISIIVNFVLFISIIR). The Cytoplasmic portion of the chain corresponds to 305–325 (ILLQKLTSPDVGGNDQSQYKR). The helical transmembrane segment at 326–346 (LAKSTLLLIPLFGVHYMVFAV) threads the bilayer. Residues 347–354 (FPISISSK) lie on the Extracellular side of the membrane. The helical transmembrane segment at 355–378 (YQILFELCLGSFQGLVVAVLYCFL) threads the bilayer. Topologically, residues 379–438 (NSEVQCELKRKWRSRCPTPSASRDYRVCGSSFSRNGSEGALQFHRGSRAQSFLQTETSVI) are cytoplasmic.

This sequence belongs to the G-protein coupled receptor 2 family. In terms of assembly, interacts with ADCYAP1/PACAP (via N-terminal extracellular domain); activated by PACAP27 and CAPAC38 neuropeptides. Interacts with VIP; the interaction results in VIPR1 activation. As to expression, expressed in CD4+ T-cells, but not in CD8+ T-cells. Expressed in the T-cell lines Jurkat, Peer, MOLT-4, HSB, YT and SUP-T1, but not in the T-cell lines HARRIS and HuT 78.

Its subcellular location is the cell membrane. Its function is as follows. G protein-coupled receptor activated by the neuropeptides vasoactive intestinal peptide (VIP) and pituitary adenylate cyclase-activating polypeptide (ADCYAP1/PACAP). Binds VIP and both PACAP27 and PACAP38 bioactive peptides with the following order of potency PACAP38 = VIP &gt; PACAP27. Ligand binding causes a conformation change that triggers signaling via guanine nucleotide-binding proteins (G proteins) and modulates the activity of downstream effectors. Activates cAMP-dependent pathway. May be coupled to phospholipase C. The sequence is that of Vasoactive intestinal polypeptide receptor 2 from Homo sapiens (Human).